A 424-amino-acid chain; its full sequence is Serpin A11 (424 aa).

An N-terminal signal peptide occupies residues 1–21; it reads MGPVWLWLWLLVAEVLLPVHC. N-linked (GlcNAc...) asparagine glycosylation is found at N108, N171, N352, and N387.

The protein belongs to the serpin family.

The protein resides in the secreted. This chain is Serpin A11 (Serpina11), found in Mus musculus (Mouse).